The sequence spans 174 residues: CDP-archaeol synthase (174 aa).

A run of 5 helical transmembrane segments spans residues 14–34 (ILEA…PVVA), 59–79 (IEGL…AALA), 83–103 (MLLA…DMAG), 118–138 (APLL…IALG), and 149–169 (AAAA…LLGL).

This sequence belongs to the CDP-archaeol synthase family. Requires Mg(2+) as cofactor.

It localises to the cell membrane. It carries out the reaction 2,3-bis-O-(geranylgeranyl)-sn-glycerol 1-phosphate + CTP + H(+) = CDP-2,3-bis-O-(geranylgeranyl)-sn-glycerol + diphosphate. Its pathway is membrane lipid metabolism; glycerophospholipid metabolism. Functionally, catalyzes the formation of CDP-2,3-bis-(O-geranylgeranyl)-sn-glycerol (CDP-archaeol) from 2,3-bis-(O-geranylgeranyl)-sn-glycerol 1-phosphate (DGGGP) and CTP. This reaction is the third ether-bond-formation step in the biosynthesis of archaeal membrane lipids. This Aeropyrum pernix (strain ATCC 700893 / DSM 11879 / JCM 9820 / NBRC 100138 / K1) protein is CDP-archaeol synthase.